We begin with the raw amino-acid sequence, 106 residues long: Large ribosomal subunit protein eL42Q (106 aa).

Belongs to the eukaryotic ribosomal protein eL42 family.

The polypeptide is Large ribosomal subunit protein eL42Q (RIM-C) (Candida maltosa (Yeast)).